The sequence spans 253 residues: Phosphate import ATP-binding protein PstB (253 aa).

Residues isoleucine 7–isoleucine 248 enclose the ABC transporter domain. Glycine 39 to serine 46 provides a ligand contact to ATP.

The protein belongs to the ABC transporter superfamily. Phosphate importer (TC 3.A.1.7) family. The complex is composed of two ATP-binding proteins (PstB), two transmembrane proteins (PstC and PstA) and a solute-binding protein (PstS).

It localises to the cell membrane. It carries out the reaction phosphate(out) + ATP + H2O = ADP + 2 phosphate(in) + H(+). Its function is as follows. Part of the ABC transporter complex PstSACB involved in phosphate import. Responsible for energy coupling to the transport system. This Methanothermobacter thermautotrophicus (strain ATCC 29096 / DSM 1053 / JCM 10044 / NBRC 100330 / Delta H) (Methanobacterium thermoautotrophicum) protein is Phosphate import ATP-binding protein PstB.